A 248-amino-acid chain; its full sequence is Isoprenyl transferase (248 aa).

Residue Asp-23 is part of the active site. A Mg(2+)-binding site is contributed by Asp-23. Residues 24–27 (GNGR), Trp-28, Arg-36, His-40, and 68–70 (STE) contribute to the substrate site. Asn-71 (proton acceptor) is an active-site residue. Substrate-binding positions include Trp-72, Arg-74, Arg-185, and 191 to 193 (RIS). Glu-204 lines the Mg(2+) pocket.

This sequence belongs to the UPP synthase family. In terms of assembly, homodimer. Mg(2+) serves as cofactor.

Functionally, catalyzes the condensation of isopentenyl diphosphate (IPP) with allylic pyrophosphates generating different type of terpenoids. This Neisseria meningitidis serogroup A / serotype 4A (strain DSM 15465 / Z2491) protein is Isoprenyl transferase.